A 371-amino-acid chain; its full sequence is Chaperone protein DnaJ (371 aa).

Positions 5 to 69 (DYYEVLGLSK…QKRAQYDQFG (65 aa)) constitute a J domain. A CR-type zinc finger spans residues 133-215 (GKELNVEIPV…CHGSGKVRKR (83 aa)). Residues C146, C149, C163, C166, C189, C192, C203, and C206 each coordinate Zn(2+). CXXCXGXG motif repeat units lie at residues 146 to 153 (CDTCKGSG), 163 to 170 (CKHCSGSG), 189 to 196 (CSHCSGTG), and 203 to 210 (CTTCHGSG).

This sequence belongs to the DnaJ family. Homodimer. Requires Zn(2+) as cofactor.

It is found in the cytoplasm. Its function is as follows. Participates actively in the response to hyperosmotic and heat shock by preventing the aggregation of stress-denatured proteins and by disaggregating proteins, also in an autonomous, DnaK-independent fashion. Unfolded proteins bind initially to DnaJ; upon interaction with the DnaJ-bound protein, DnaK hydrolyzes its bound ATP, resulting in the formation of a stable complex. GrpE releases ADP from DnaK; ATP binding to DnaK triggers the release of the substrate protein, thus completing the reaction cycle. Several rounds of ATP-dependent interactions between DnaJ, DnaK and GrpE are required for fully efficient folding. Also involved, together with DnaK and GrpE, in the DNA replication of plasmids through activation of initiation proteins. The protein is Chaperone protein DnaJ of Bacillus anthracis (strain A0248).